The sequence spans 281 residues: ATP synthase gamma chain (281 aa).

The protein belongs to the ATPase gamma chain family. F-type ATPases have 2 components, CF(1) - the catalytic core - and CF(0) - the membrane proton channel. CF(1) has five subunits: alpha(3), beta(3), gamma(1), delta(1), epsilon(1). CF(0) has three main subunits: a, b and c.

Its subcellular location is the cell membrane. Produces ATP from ADP in the presence of a proton gradient across the membrane. The gamma chain is believed to be important in regulating ATPase activity and the flow of protons through the CF(0) complex. In Mesoplasma florum (strain ATCC 33453 / NBRC 100688 / NCTC 11704 / L1) (Acholeplasma florum), this protein is ATP synthase gamma chain.